The sequence spans 194 residues: MSEIKLIVGLGNPGDKYADTRHNAGEWLVERLARRFNFNLKDEAKFFGKTARAVIGGEEVRFLIPTTFMNLSGKAVGALATFYRIKPEEILVIHDELDLPPGVAKIKQGGGHGGHNGLKDTIAQLANNKNFYRLRIGIGHPGDKNLVSAYVLSKPSPIDRSAIDKALDEAASCMEILLKDGITKATNRLNGFKA.

Tyr17 is a tRNA binding site. His22 acts as the Proton acceptor in catalysis. TRNA contacts are provided by Phe68, Asn70, and Asn116.

This sequence belongs to the PTH family. Monomer.

The protein localises to the cytoplasm. The enzyme catalyses an N-acyl-L-alpha-aminoacyl-tRNA + H2O = an N-acyl-L-amino acid + a tRNA + H(+). Functionally, hydrolyzes ribosome-free peptidyl-tRNAs (with 1 or more amino acids incorporated), which drop off the ribosome during protein synthesis, or as a result of ribosome stalling. In terms of biological role, catalyzes the release of premature peptidyl moieties from peptidyl-tRNA molecules trapped in stalled 50S ribosomal subunits, and thus maintains levels of free tRNAs and 50S ribosomes. In Mannheimia succiniciproducens (strain KCTC 0769BP / MBEL55E), this protein is Peptidyl-tRNA hydrolase.